Here is a 75-residue protein sequence, read N- to C-terminus: Translation initiation factor IF-1 1 (75 aa).

In terms of domain architecture, S1-like spans 1–74 (MARSDMIEVD…TRGRIVYRYR (74 aa)).

This sequence belongs to the IF-1 family. In terms of assembly, component of the 30S ribosomal translation pre-initiation complex which assembles on the 30S ribosome in the order IF-2 and IF-3, IF-1 and N-formylmethionyl-tRNA(fMet); mRNA recruitment can occur at any time during PIC assembly.

It is found in the cytoplasm. In terms of biological role, one of the essential components for the initiation of protein synthesis. Stabilizes the binding of IF-2 and IF-3 on the 30S subunit to which N-formylmethionyl-tRNA(fMet) subsequently binds. Helps modulate mRNA selection, yielding the 30S pre-initiation complex (PIC). Upon addition of the 50S ribosomal subunit IF-1, IF-2 and IF-3 are released leaving the mature 70S translation initiation complex. The polypeptide is Translation initiation factor IF-1 1 (Symbiobacterium thermophilum (strain DSM 24528 / JCM 14929 / IAM 14863 / T)).